A 306-amino-acid polypeptide reads, in one-letter code: Ribosomal protein L11 methyltransferase (306 aa).

Residues Thr-139, Gly-173, Asp-195, and Asn-242 each coordinate S-adenosyl-L-methionine.

It belongs to the methyltransferase superfamily. PrmA family.

Its subcellular location is the cytoplasm. It catalyses the reaction L-lysyl-[protein] + 3 S-adenosyl-L-methionine = N(6),N(6),N(6)-trimethyl-L-lysyl-[protein] + 3 S-adenosyl-L-homocysteine + 3 H(+). Functionally, methylates ribosomal protein L11. The protein is Ribosomal protein L11 methyltransferase of Nostoc sp. (strain PCC 7120 / SAG 25.82 / UTEX 2576).